A 178-amino-acid polypeptide reads, in one-letter code: CDP-archaeol synthase (178 aa).

Transmembrane regions (helical) follow at residues 3–23, 56–76, 91–111, 131–151, and 152–172; these read LLLLLFSALWYILPAYVANAV, FFGILFGIITGILQHFIVILY, IILSFLLATGALFGDMLGSFI, FIIFALLFAYSLYPVPANIIV, and LLLVISPIIHFSSNIIAYKLH.

The protein belongs to the CDP-archaeol synthase family. The cofactor is Mg(2+).

It is found in the cell membrane. It carries out the reaction 2,3-bis-O-(geranylgeranyl)-sn-glycerol 1-phosphate + CTP + H(+) = CDP-2,3-bis-O-(geranylgeranyl)-sn-glycerol + diphosphate. Its pathway is membrane lipid metabolism; glycerophospholipid metabolism. Catalyzes the formation of CDP-2,3-bis-(O-geranylgeranyl)-sn-glycerol (CDP-archaeol) from 2,3-bis-(O-geranylgeranyl)-sn-glycerol 1-phosphate (DGGGP) and CTP. This reaction is the third ether-bond-formation step in the biosynthesis of archaeal membrane lipids. The polypeptide is CDP-archaeol synthase (Methanococcus maripaludis (strain DSM 14266 / JCM 13030 / NBRC 101832 / S2 / LL)).